The chain runs to 118 residues: Non-specific lipid-transfer protein 2 (118 aa).

Positions 1-25 (MAGVMKLACMVLACMIVAGPITANA) are cleaved as a signal peptide. Disulfide bonds link Cys-29–Cys-76, Cys-39–Cys-53, Cys-54–Cys-100, and Cys-74–Cys-114.

The protein belongs to the plant LTP family.

Its function is as follows. Plant non-specific lipid-transfer proteins transfer phospholipids as well as galactolipids across membranes. May play a role in wax or cutin deposition in the cell walls of expanding epidermal cells and certain secretory tissues. The polypeptide is Non-specific lipid-transfer protein 2 (LTP2) (Arabidopsis thaliana (Mouse-ear cress)).